We begin with the raw amino-acid sequence, 350 residues long: Divinyl chlorophyll a/b light-harvesting protein PcbB (350 aa).

The next 6 membrane-spanning stretches (helical) occupy residues 27 to 47, 89 to 109, 141 to 161, 202 to 222, 244 to 264, and 305 to 325; these read FLAA…SFTL, IVVT…GGLM, FILG…VEWA, VMGG…WHIV, LSWA…WCAS, and LTNI…WHAL.

The protein belongs to the PsbB/PsbC family. IsiA/Pcb subfamily. As to quaternary structure, the antenna complex consists of divinyl chlorophylls (a and b) and divinyl chlorophyll a/b binding proteins. Under iron-starvation forms a complex with PSI, consisting of a PSI trimer surrounded by a ring composed of 18 PcbB subunits. Divinyl chlorophyll a serves as cofactor. The cofactor is divinyl chlorophyll b.

The protein localises to the cellular thylakoid membrane. The antenna complex functions as a light receptor, it captures and delivers excitation energy to photosystems I. The Prochlorales pcb genes are not related to higher plant LHCs. The sequence is that of Divinyl chlorophyll a/b light-harvesting protein PcbB (pcbB) from Prochlorococcus marinus (strain MIT 9313).